The primary structure comprises 132 residues: MEALNADVTQGLEKGSLITCADNTGARELKVTSISGYSGTKNRHPKAGLGDKITVSVTKGTPEMRRQVLEAVVIRQRKPIRRPDGTRVKFEDNAAVIVDENEDPRGTELKGPIAREVAERFGSIASTATIIV.

The protein belongs to the universal ribosomal protein uL14 family. In terms of assembly, part of the 50S ribosomal subunit. Forms a cluster with proteins L3 and L24e, part of which may contact the 16S rRNA in 2 intersubunit bridges.

Its function is as follows. Binds to 23S rRNA. Forms part of two intersubunit bridges in the 70S ribosome. The chain is Large ribosomal subunit protein uL14 from Natronomonas pharaonis (strain ATCC 35678 / DSM 2160 / CIP 103997 / JCM 8858 / NBRC 14720 / NCIMB 2260 / Gabara) (Halobacterium pharaonis).